The primary structure comprises 263 residues: ABC transporter I family member 17 (263 aa).

The 232-residue stretch at 29-260 (IRVHDLTRVA…THPMAQRFLQ (232 aa)) folds into the ABC transporter domain. ATP is bound at residue 62-69 (GPSGSGKS).

The protein belongs to the ABC transporter superfamily. ABCI family.

The chain is ABC transporter I family member 17 (ABCI17) from Arabidopsis thaliana (Mouse-ear cress).